The sequence spans 288 residues: Hyaluronidase (288 aa).

An N-linked (GlcNAc...) asparagine glycan is attached at Asn36. Glu66 (proton donor) is an active-site residue. Residues Cys142 and Cys154 are joined by a disulfide bond. N-linked (GlcNAc...) asparagine glycosylation occurs at Asn282.

It belongs to the glycosyl hydrolase 56 family. In terms of tissue distribution, expressed by the venom gland.

It localises to the secreted. The enzyme catalyses Random hydrolysis of (1-&gt;4)-linkages between N-acetyl-beta-D-glucosamine and D-glucuronate residues in hyaluronate.. In terms of biological role, hydrolyzes high molecular weight hyaluronic acid to produce small oligosaccharides. This is Hyaluronidase from Polybia paulista (Neotropical social wasp).